The sequence spans 375 residues: Cyclic AMP receptor 2 (375 aa).

Residues 1–10 are Extracellular-facing; that stretch reads MTIMSDIIAQ. Residues 11–30 form a helical membrane-spanning segment; the sequence is RTILLIADFSSIIGCSLVLI. The Cytoplasmic portion of the chain corresponds to 31-44; it reads GFWRLKLLRNHITK. A helical membrane pass occupies residues 45-65; that stretch reads IISLFCATSLFKDVISTIITL. Over 66–82 the chain is Extracellular; the sequence is LYKPDQTESGFPCYLHA. The helical transmembrane segment at 83–108 threads the bilayer; that stretch reads IVITFGSLACWLWTLMLSFSIYNLIV. At 109–119 the chain is on the cytoplasmic side; it reads RREPEPERFEK. The helical transmembrane segment at 120–138 threads the bilayer; the sequence is FYFCLCYGLPLISTIVMLS. Residues 139–161 lie on the Extracellular side of the membrane; that stretch reads THIIQPVGGWCWIGDNYDGYRFG. Residues 162 to 180 traverse the membrane as a helical segment; sequence LFYGPFFFIWGTSAILVGL. Topologically, residues 181–204 are cytoplasmic; it reads TSKYTYSVIRSSVSDNKDKHMTYQ. Ser192 bears the Phosphoserine mark. The chain crosses the membrane as a helical span at residues 205–223; that stretch reads FKLINYIVVFLVCWVFAIV. Residues 224 to 234 lie on the Extracellular side of the membrane; the sequence is NRILNGLNQFP. A helical membrane pass occupies residues 235–259; the sequence is TVPNVLHTYFSVSHGFYASITFIYN. At 260–375 the chain is on the cytoplasmic side; the sequence is NPLMWRYFGA…NNINNKNDMI (116 aa). Phosphoserine is present on residues Ser298 and Ser303. The segment at 338-375 is disordered; sequence PKENENQNHHHHHHHHHHHNHYNNNNNNNNINNKNDMI. Residues 346–358 are compositionally biased toward basic residues; it reads HHHHHHHHHHHNH. The span at 359 to 375 shows a compositional bias: low complexity; the sequence is YNNNNNNNNINNKNDMI.

The protein belongs to the G-protein coupled receptor 5 family. In terms of processing, C-terminal Ser or Thr residues may be phosphorylated.

It is found in the membrane. Its function is as follows. Receptor for cAMP. Coordinates the aggregation of individual cells into a multicellular organism and regulates the expression of a large number of developmentally regulated genes. The activity of this receptor is mediated by G proteins. Plays a key role during tip formation and late development; involved in cAMP-directed patterning of pre stalk cells as they sort before and during tip formation. This Dictyostelium discoideum (Social amoeba) protein is Cyclic AMP receptor 2 (carB).